A 202-amino-acid polypeptide reads, in one-letter code: Glycerol-3-phosphate acyltransferase (202 aa).

Helical transmembrane passes span 3-23 (NLII…LILA), 61-81 (IATI…LKFL), 87-107 (LLWS…YLLF), 118-138 (GAMI…WVVI), 144-164 (ISSL…FIFN), and 167-187 (LEIH…YKHL).

This sequence belongs to the PlsY family. Probably interacts with PlsX.

It localises to the cell inner membrane. It carries out the reaction an acyl phosphate + sn-glycerol 3-phosphate = a 1-acyl-sn-glycero-3-phosphate + phosphate. The protein operates within lipid metabolism; phospholipid metabolism. Its function is as follows. Catalyzes the transfer of an acyl group from acyl-phosphate (acyl-PO(4)) to glycerol-3-phosphate (G3P) to form lysophosphatidic acid (LPA). This enzyme utilizes acyl-phosphate as fatty acyl donor, but not acyl-CoA or acyl-ACP. The chain is Glycerol-3-phosphate acyltransferase from Campylobacter jejuni subsp. jejuni serotype O:6 (strain 81116 / NCTC 11828).